The chain runs to 364 residues: D-alanine--D-alanine ligase (364 aa).

Positions 134–347 constitute an ATP-grasp domain; the sequence is RRLACINGLK…YPDLLDELIN (214 aa). Residue 167–222 coordinates ATP; that stretch reads ASEFGWPLFVKPCSLGSSVGIHKANNMDELNAAVADALRYDEEILVEEFIVGREIE. 3 residues coordinate Mg(2+): aspartate 300, glutamate 314, and asparagine 316.

It belongs to the D-alanine--D-alanine ligase family. The cofactor is Mg(2+). Requires Mn(2+) as cofactor.

Its subcellular location is the cytoplasm. It catalyses the reaction 2 D-alanine + ATP = D-alanyl-D-alanine + ADP + phosphate + H(+). Its pathway is cell wall biogenesis; peptidoglycan biosynthesis. Cell wall formation. The chain is D-alanine--D-alanine ligase from Legionella pneumophila (strain Paris).